A 216-amino-acid polypeptide reads, in one-letter code: Protein U63 (216 aa).

Belongs to the herpesviridae UL92 family.

This is Protein U63 (U63) from Homo sapiens (Human).